Here is a 138-residue protein sequence, read N- to C-terminus: Nucleoside diphosphate kinase (138 aa).

Residues Lys11, Phe59, Arg87, Thr93, Arg104, and Asn114 each contribute to the ATP site. Residue His117 is the Pros-phosphohistidine intermediate of the active site.

Belongs to the NDK family. It depends on Mg(2+) as a cofactor.

The protein localises to the cytoplasm. The catalysed reaction is a 2'-deoxyribonucleoside 5'-diphosphate + ATP = a 2'-deoxyribonucleoside 5'-triphosphate + ADP. It carries out the reaction a ribonucleoside 5'-diphosphate + ATP = a ribonucleoside 5'-triphosphate + ADP. Functionally, major role in the synthesis of nucleoside triphosphates other than ATP. The ATP gamma phosphate is transferred to the NDP beta phosphate via a ping-pong mechanism, using a phosphorylated active-site intermediate. The polypeptide is Nucleoside diphosphate kinase (Saccharolobus solfataricus (strain ATCC 35092 / DSM 1617 / JCM 11322 / P2) (Sulfolobus solfataricus)).